The sequence spans 300 residues: MVKQRTLNRVVKASGIGLHSGQKVMINFIPHTVDGGIVFRRIDLDPPVDIPANALLIQEAFMCSNLVTGDIKVGTIEHVMSAIASLGIDNLIVEVSASEVPIMDGSAGPFIYLLMQGGLREQDAPKKFIKILKPVEALIDDKKAIFSPHNGFQLNFTIDFDHPAFAKEYQSATIDFSTETFVYEVSEARTFGFMKDLDYLKANNLALGASLDNAIGVDDTGVVNEEGLRFADEFVRHKILDAVGDLYLLGHQIIAKFDGYKSGHALNNQLLRNVQSDPSNYEIVTFDDEKDCPIPYVSVT.

3 residues coordinate Zn(2+): histidine 78, histidine 237, and aspartate 241. The active-site Proton donor is the histidine 264.

The protein belongs to the LpxC family. The cofactor is Zn(2+).

The catalysed reaction is a UDP-3-O-[(3R)-3-hydroxyacyl]-N-acetyl-alpha-D-glucosamine + H2O = a UDP-3-O-[(3R)-3-hydroxyacyl]-alpha-D-glucosamine + acetate. It participates in glycolipid biosynthesis; lipid IV(A) biosynthesis; lipid IV(A) from (3R)-3-hydroxytetradecanoyl-[acyl-carrier-protein] and UDP-N-acetyl-alpha-D-glucosamine: step 2/6. Its function is as follows. Catalyzes the hydrolysis of UDP-3-O-myristoyl-N-acetylglucosamine to form UDP-3-O-myristoylglucosamine and acetate, the committed step in lipid A biosynthesis. The chain is UDP-3-O-acyl-N-acetylglucosamine deacetylase from Acinetobacter baumannii (strain SDF).